Here is a 273-residue protein sequence, read N- to C-terminus: uncharacterized protein (273 aa).

10 to 34 provides a ligand contact to NAD(+); that stretch reads VITGAATGIGQATAEVFANEGARVI. Position 142 (Ser-142) interacts with substrate. Residue Tyr-155 is the Proton acceptor of the active site.

It belongs to the short-chain dehydrogenases/reductases (SDR) family.

This is an uncharacterized protein from Bacillus subtilis (strain 168).